A 123-amino-acid polypeptide reads, in one-letter code: Small ribosomal subunit protein uS12 (123 aa).

Residues 1 to 26 (MPTINQLVRKPRKSRSSLNKAPALQH) are disordered. 3-methylthioaspartic acid is present on aspartate 90.

This sequence belongs to the universal ribosomal protein uS12 family. As to quaternary structure, part of the 30S ribosomal subunit. Contacts proteins S8 and S17. May interact with IF1 in the 30S initiation complex.

In terms of biological role, with S4 and S5 plays an important role in translational accuracy. Functionally, interacts with and stabilizes bases of the 16S rRNA that are involved in tRNA selection in the A site and with the mRNA backbone. Located at the interface of the 30S and 50S subunits, it traverses the body of the 30S subunit contacting proteins on the other side and probably holding the rRNA structure together. The combined cluster of proteins S8, S12 and S17 appears to hold together the shoulder and platform of the 30S subunit. This is Small ribosomal subunit protein uS12 from Ehrlichia chaffeensis (strain ATCC CRL-10679 / Arkansas).